Consider the following 581-residue polypeptide: Rhodanese-like domain-containing protein 6 (581 aa).

The Rhodanese domain maps to 158–258; sequence ENKELVLLDA…YLEQFPSGGF (101 aa). The Cysteine persulfide intermediate role is filled by Cys-216.

In Arabidopsis thaliana (Mouse-ear cress), this protein is Rhodanese-like domain-containing protein 6 (STR6).